A 467-amino-acid polypeptide reads, in one-letter code: Putative odorant receptor 85e (467 aa).

At Met-1–Lys-60 the chain is on the cytoplasmic side. Residues Val-61–Phe-81 form a helical membrane-spanning segment. Topologically, residues Thr-82–Thr-98 are extracellular. A helical transmembrane segment spans residues Asp-99–Leu-119. The Cytoplasmic portion of the chain corresponds to Arg-120–Thr-159. Residues Val-160–Leu-180 form a helical membrane-spanning segment. The Extracellular segment spans residues Gly-181–Gln-212. Residues Ile-213 to Leu-233 form a helical membrane-spanning segment. Residues Leu-234–Glu-286 lie on the Cytoplasmic side of the membrane. The chain crosses the membrane as a helical span at residues His-287 to Phe-307. At His-308–Pro-334 the chain is on the extracellular side. Residues Tyr-335–Val-355 traverse the membrane as a helical segment. At Ser-356–Gln-367 the chain is on the cytoplasmic side. A helical membrane pass occupies residues Leu-368–Leu-388. At Ser-389 to Leu-467 the chain is on the extracellular side.

Belongs to the insect chemoreceptor superfamily. Heteromeric odorant receptor channel (TC 1.A.69) family. Or2a subfamily. Interacts with Orco. Complexes exist early in the endomembrane system in olfactory sensory neurons (OSNs), coupling these complexes to the conserved ciliary trafficking pathway. Expressed in 15% of the 120 sensory neurons within the maxillary palp.

It is found in the cell membrane. In terms of biological role, odorant receptor which mediates acceptance or avoidance behavior, depending on its substrates. The odorant receptor repertoire encodes a large collection of odor stimuli that vary widely in identity, intensity, and duration. May form a complex with Orco to form odorant-sensing units, providing sensitive and prolonged odorant signaling and calcium permeability. This is Putative odorant receptor 85e (Or85e) from Drosophila melanogaster (Fruit fly).